Consider the following 355-residue polypeptide: 3-isopropylmalate dehydrogenase (355 aa).

The substrate site is built by R90, R100, R128, and D222. The Mg(2+) site is built by D222, D246, and D250. Position 280-292 (280-292 (GSAPDIAGKGIAN)) interacts with NAD(+).

It belongs to the isocitrate and isopropylmalate dehydrogenases family. LeuB type 1 subfamily. Homodimer. Mg(2+) is required as a cofactor. It depends on Mn(2+) as a cofactor.

It localises to the cytoplasm. It carries out the reaction (2R,3S)-3-isopropylmalate + NAD(+) = 4-methyl-2-oxopentanoate + CO2 + NADH. It participates in amino-acid biosynthesis; L-leucine biosynthesis; L-leucine from 3-methyl-2-oxobutanoate: step 3/4. Its function is as follows. Catalyzes the oxidation of 3-carboxy-2-hydroxy-4-methylpentanoate (3-isopropylmalate) to 3-carboxy-4-methyl-2-oxopentanoate. The product decarboxylates to 4-methyl-2 oxopentanoate. The sequence is that of 3-isopropylmalate dehydrogenase from Burkholderia multivorans (strain ATCC 17616 / 249).